A 341-amino-acid polypeptide reads, in one-letter code: Dihydroorotate dehydrogenase (quinone) (341 aa).

Residues 61-65 and threonine 85 each bind FMN; that span reads AGLDK. Lysine 65 serves as a coordination point for substrate. Substrate is bound at residue 110–114; the sequence is NRMGF. Residues asparagine 138 and asparagine 171 each coordinate FMN. Asparagine 171 serves as a coordination point for substrate. Catalysis depends on serine 174, which acts as the Nucleophile. Asparagine 176 contacts substrate. 2 residues coordinate FMN: lysine 216 and threonine 244. 245–246 contributes to the substrate binding site; sequence NT. Residues glycine 267, glycine 296, and 317–318 each bind FMN; that span reads YS.

It belongs to the dihydroorotate dehydrogenase family. Type 2 subfamily. Monomer. Requires FMN as cofactor.

The protein localises to the cell membrane. The enzyme catalyses (S)-dihydroorotate + a quinone = orotate + a quinol. The protein operates within pyrimidine metabolism; UMP biosynthesis via de novo pathway; orotate from (S)-dihydroorotate (quinone route): step 1/1. Catalyzes the conversion of dihydroorotate to orotate with quinone as electron acceptor. The chain is Dihydroorotate dehydrogenase (quinone) from Pseudomonas fluorescens (strain SBW25).